The primary structure comprises 490 residues: GTPase Der (490 aa).

EngA-type G domains follow at residues Pro3 to Leu166 and Ile203 to Thr376. GTP is bound by residues Gly9–Ser16, Asp56–Ile60, Asn118–Asp121, Gly209–Ser216, Asp256–Val260, and Asn321–Asp324. The region spanning Arg377–Glu461 is the KH-like domain.

The protein belongs to the TRAFAC class TrmE-Era-EngA-EngB-Septin-like GTPase superfamily. EngA (Der) GTPase family. As to quaternary structure, associates with the 50S ribosomal subunit.

In terms of biological role, GTPase that plays an essential role in the late steps of ribosome biogenesis. This Escherichia coli O7:K1 (strain IAI39 / ExPEC) protein is GTPase Der.